Reading from the N-terminus, the 401-residue chain is G2/mitotic-specific cyclin-B1 (401 aa).

It belongs to the cyclin family. Cyclin AB subfamily. In terms of assembly, interacts with the CDK1 protein kinase to form a serine/threonine kinase holoenzyme complex also known as maturation promoting factor (MPF). The cyclin subunit imparts substrate specificity to the complex.

Its function is as follows. Essential for the control of the cell cycle at the G2/M (mitosis) transition. In Oryzias luzonensis (Luzon ricefish), this protein is G2/mitotic-specific cyclin-B1 (ccnb1).